A 153-amino-acid chain; its full sequence is Large ribosomal subunit protein uL15 (153 aa).

Residues 1–47 are disordered; that stretch reads MRLHELSPAPGSRKDRKRVGRGDAGRGNYSGRGMKGQKARSGGATRP.

Belongs to the universal ribosomal protein uL15 family. Part of the 50S ribosomal subunit.

Functionally, binds to the 23S rRNA. The protein is Large ribosomal subunit protein uL15 of Dehalococcoides mccartyi (strain ATCC BAA-2100 / JCM 16839 / KCTC 5957 / BAV1).